The chain runs to 450 residues: UDP-N-acetylmuramoylalanine--D-glutamate ligase (450 aa).

ATP is bound at residue 119 to 125; it reads GSNGKTT.

Belongs to the MurCDEF family.

It is found in the cytoplasm. The enzyme catalyses UDP-N-acetyl-alpha-D-muramoyl-L-alanine + D-glutamate + ATP = UDP-N-acetyl-alpha-D-muramoyl-L-alanyl-D-glutamate + ADP + phosphate + H(+). Its pathway is cell wall biogenesis; peptidoglycan biosynthesis. Cell wall formation. Catalyzes the addition of glutamate to the nucleotide precursor UDP-N-acetylmuramoyl-L-alanine (UMA). This is UDP-N-acetylmuramoylalanine--D-glutamate ligase from Bacillus thuringiensis (strain Al Hakam).